The primary structure comprises 84 residues: Subtilisin-chymotrypsin inhibitor WSCI (84 aa).

Residues 1 to 12 form the signal peptide; sequence MSSVVKKPLGGN. Positions 1-28 are disordered; that stretch reads MSSVVKKPLGGNTDTGDHHNQKTEWPEL. The segment covering 15–25 has biased composition (basic and acidic residues); it reads TGDHHNQKTEW.

Monomer.

The protein resides in the secreted. Inhibits B.lichenoformis subtilisin, B.subtilis subtilisin, bovine pancreatic alpha-chymotrypsin and porcine alpha-chymotrypsin with Ki of 3.92 nM, 5.70 nM, 7.24 nM and 9.35 nM respectively. B.lichenoformis subtilisin is inhibited with a molar ratio of 1:0.87. Also inhibits chymotrypsin-like activities from the digestive tracts of the insect larvae T.molitor, P.interpunctella and H.armigera. Does not inhibit bovine pancreatic trypsin, porcine pancreatic elastase, or human leukocyte elastase. This Triticum aestivum (Wheat) protein is Subtilisin-chymotrypsin inhibitor WSCI.